A 359-amino-acid chain; its full sequence is Ribosomal RNA large subunit methyltransferase M (359 aa).

S-adenosyl-L-methionine-binding positions include Ser-186, Cys-219–Gly-222, Asp-238, Asp-258, and Asp-275. The Proton acceptor role is filled by Lys-304.

Belongs to the class I-like SAM-binding methyltransferase superfamily. RNA methyltransferase RlmE family. RlmM subfamily. In terms of assembly, monomer.

The protein localises to the cytoplasm. The catalysed reaction is cytidine(2498) in 23S rRNA + S-adenosyl-L-methionine = 2'-O-methylcytidine(2498) in 23S rRNA + S-adenosyl-L-homocysteine + H(+). Catalyzes the 2'-O-methylation at nucleotide C2498 in 23S rRNA. The sequence is that of Ribosomal RNA large subunit methyltransferase M from Vibrio parahaemolyticus serotype O3:K6 (strain RIMD 2210633).